Reading from the N-terminus, the 1070-residue chain is Envelopment polyprotein (1070 aa).

An N-terminal signal peptide occupies residues 1–17; it reads MMFSRVMQLALICAVTC. Residues 18-457 lie on the Lumenal side of the membrane; it reads EDNPCLWERF…SNPQCYPYGK (440 aa). 8 cysteine pairs are disulfide-bonded: Cys22–Cys55, Cys152–Cys165, Cys211–Cys221, Cys267–Cys309, Cys296–Cys301, Cys353–Cys356, Cys360–Cys429, and Cys380–Cys385. Asn269 carries an N-linked (GlcNAc...) asparagine; by host glycan. The chain crosses the membrane as a helical span at residues 458 to 478; it reads WFLLFLILATLYIIVALLKTI. Residues 479–536 are Cytoplasmic-facing; the sequence is MRIFMACLSVLYGPFIIIIKISRCLGRLGKRKGERTYVRLMEALDDERKPEVVRAPVS. Positions 480–522 are golgi retention signal; the sequence is RIFMACLSVLYGPFIIIIKISRCLGRLGKRKGERTYVRLMEAL. The tract at residues 541–560 is internal signal sequence for glycoprotein C; it reads KQPRIVLFIVLALLVHMALC. A propeptide spanning residues 550–560 is cleaved from the precursor; the sequence is VLALLVHMALC. The Lumenal segment spans residues 550 to 1023; it reads VLALLVHMAL…NWLDTLFGAS (474 aa). 10 disulfide bridges follow: Cys561/Cys602, Cys574/Cys584, Cys642/Cys831, Cys648/Cys696, Cys654/Cys703, Cys659/Cys685, Cys689/Cys694, Cys799/Cys813, Cys896/Cys966, and Cys906/Cys909. The tract at residues 648-654 is fusion loop; the sequence is CRWAGSC. The fusion loop stretch occupies residues 690 to 701; that stretch reads GGAACGCFNAAP. A helical transmembrane segment spans residues 1024–1044; the sequence is LLGKILGIGLAILSPFILILI. Residues 1045 to 1070 lie on the Cytoplasmic side of the membrane; that stretch reads LRWILRVVLRRSRIRREPKYEMAKYS.

This sequence belongs to the phlebovirus envelope glycoprotein family. In terms of assembly, heterodimer with glycoprotein C. Heterodimer with glycoprotein N. Homotrimer (postfusion). In terms of processing, specific enzymatic cleavages in vivo yield mature proteins Glycoprotein C, and Glycoprotein N. Post-translationally, glycosylated. Palmitoylated.

The protein localises to the virion membrane. The protein resides in the host Golgi apparatus membrane. It is found in the host endoplasmic reticulum membrane. Structural component of the virion that interacts with glycoprotein C. It shields the hydrophobic fusion loops of the glycoprotein C, preventing premature fusion. The glycoprotein protrusions are arranged on an icosahedral lattice, with T=12 triangulation. They are able to attach the virion to the host cell receptor CD209/DC-SIGN and to promote fusion of membranes with the late endosome after endocytosis of the virion. Plays a role in the packaging of ribonucleoproteins during virus assembly. Its function is as follows. Structural component of the virion that interacts with glycoprotein N. Acts as a class II fusion protein that is activated upon acidification and subsequent repositioning of the glycoprotein N. The glycoprotein protrusions are arranged on an icosahedral lattice, with T=12 triangulation. They are able to attach the virion to the host cell receptor CD209/DC-SIGN and to promote fusion of membranes with the late endosome after endocytosis of the virion. The chain is Envelopment polyprotein (GP) from Amblyomma variegatum (Tropical bont tick).